Consider the following 235-residue polypeptide: Nucleoside diphosphate kinase 4, chloroplastic (235 aa).

ATP is bound by residues Lys93, Phe141, Arg169, Thr175, Arg186, and Asn196. His199 acts as the Pros-phosphohistidine intermediate in catalysis.

It belongs to the NDK family. Homohexamer. Mg(2+) is required as a cofactor.

Its subcellular location is the plastid. It localises to the chloroplast thylakoid lumen. The enzyme catalyses a 2'-deoxyribonucleoside 5'-diphosphate + ATP = a 2'-deoxyribonucleoside 5'-triphosphate + ADP. It carries out the reaction a ribonucleoside 5'-diphosphate + ATP = a ribonucleoside 5'-triphosphate + ADP. Functionally, major role in the synthesis of nucleoside triphosphates other than ATP. The ATP gamma phosphate is transferred to the NDP beta phosphate via a ping-pong mechanism, using a phosphorylated active-site intermediate. Shows the highest specificity towards GDP. This Spinacia oleracea (Spinach) protein is Nucleoside diphosphate kinase 4, chloroplastic (NDK4).